Reading from the N-terminus, the 619-residue chain is Chaperone protein HscA homolog (619 aa).

This sequence belongs to the heat shock protein 70 family.

Functionally, chaperone involved in the maturation of iron-sulfur cluster-containing proteins. Has a low intrinsic ATPase activity which is markedly stimulated by HscB. The protein is Chaperone protein HscA homolog of Shewanella amazonensis (strain ATCC BAA-1098 / SB2B).